We begin with the raw amino-acid sequence, 285 residues long: Bifunctional protein FolD (285 aa).

NADP(+) is bound by residues 166 to 168 (GAS) and Ile-232.

Belongs to the tetrahydrofolate dehydrogenase/cyclohydrolase family. In terms of assembly, homodimer.

It catalyses the reaction (6R)-5,10-methylene-5,6,7,8-tetrahydrofolate + NADP(+) = (6R)-5,10-methenyltetrahydrofolate + NADPH. The enzyme catalyses (6R)-5,10-methenyltetrahydrofolate + H2O = (6R)-10-formyltetrahydrofolate + H(+). It participates in one-carbon metabolism; tetrahydrofolate interconversion. With respect to regulation, the NAD(+)-dependent dehydrogenase is activated by inorganic phosphate. In terms of biological role, catalyzes the oxidation of 5,10-methylenetetrahydrofolate to 5,10-methenyltetrahydrofolate and then the hydrolysis of 5,10-methenyltetrahydrofolate to 10-formyltetrahydrofolate. This is Bifunctional protein FolD from Photobacterium phosphoreum.